We begin with the raw amino-acid sequence, 725 residues long: Eukaryotic elongation factor 2 kinase (725 aa).

Residues 1 to 12 show a composition bias toward basic and acidic residues; that stretch reads MADEDLIFRLEG. Positions 1–38 are disordered; that stretch reads MADEDLIFRLEGVDGGQSPRAGHDGDSDGDSDDEEGYF. Ala-2 carries the post-translational modification N-acetylalanine. 2 positions are modified to phosphoserine: Ser-18 and Ser-27. The segment covering 27–36 has biased composition (acidic residues); sequence SDGDSDDEEG. Phosphoserine; by autocatalysis occurs at positions 61 and 66. Residues Ser-70, Ser-71, Ser-72, and Ser-74 each carry the phosphoserine modification. Ser-78 is subject to Phosphoserine; by autocatalysis and TRPM7. The segment at 81–94 is calmodulin-binding; it reads FKEAWKHAIQKAKH. Residues 116–326 form the Alpha-type protein kinase domain; that stretch reads RYNAVTGEWL…ICESMGLAPF (211 aa). A Phosphoserine modification is found at Ser-243. 296–302 is a binding site for ATP; it reads GDGNLGV. 2 positions are modified to phosphothreonine; by autocatalysis: Thr-348 and Thr-353. Disordered regions lie at residues 352–405 and 423–477; these read GTEE…PHSQ and SRDH…SLGS. Ser-359 carries the phosphoserine; by MAPK13 and CDK1 modification. The span at 363–377 shows a compositional bias: low complexity; it reads RTLSGSRPPLLRPLS. The residue at position 366 (Ser-366) is a Phosphoserine; by autocatalysis, RPS6KA1 and RPS6KB1. The span at 386–404 shows a compositional bias: polar residues; sequence SDVTFDSLPSSPSSATPHS. Ser-392 carries the post-translational modification Phosphoserine. The residue at position 398 (Ser-398) is a Phosphoserine; by AMPK. 2 stretches are compositionally biased toward basic and acidic residues: residues 423–436 and 445–469; these read SRDHDHLDNHRESE and SEKRGELDDPEPREHGHSYSNRKYE. Ser-435 is subject to Phosphoserine. At Ser-445 the chain carries Phosphoserine; by autocatalysis. Residue Ser-470 is modified to Phosphoserine. Phosphoserine; by autocatalysis is present on Ser-474. A Phosphoserine modification is found at Ser-477. The residue at position 491 (Ser-491) is a Phosphoserine; by autocatalysis. Ser-500 is subject to Phosphoserine; by PKA.

Belongs to the protein kinase superfamily. Alpha-type protein kinase family. As to quaternary structure, monomer or homodimer. Interacts with Calmodulin/CALM1; this interaction is strictly required for phosphorylation activity. In terms of processing, autophosphorylated at multiple residues, Thr-348 being the major site. Phosphorylated by AMP-activated protein kinase AMPK at Ser-398 leading to EEF2K activation and protein synthesis inhibition. Phosphorylated by TRPM7 at Ser-78 resulting in improved protein stability, higher EE2F phosphorylated and subsequently reduced rate of protein synthesis. Phosphorylation by other kinases such as CDK1 and MAPK13 at Ser-359 or RPS6KA1 and RPS6KB1 at Ser-366 instead decrease EEF2K activity and promote protein synthesis.

It catalyses the reaction [translation elongation factor 2] + ATP = [translation elongation factor 2]-phosphate + ADP + H(+). With respect to regulation, undergoes calcium/calmodulin-dependent intramolecular autophosphorylation, and this results in it becoming partially calcium/calmodulin-independent. Its function is as follows. Threonine kinase that regulates protein synthesis by controlling the rate of peptide chain elongation. Upon activation by a variety of upstream kinases including AMPK or TRPM7, phosphorylates the elongation factor EEF2 at a single site, renders it unable to bind ribosomes and thus inactive. In turn, the rate of protein synthesis is reduced. The polypeptide is Eukaryotic elongation factor 2 kinase (EEF2K) (Homo sapiens (Human)).